Reading from the N-terminus, the 57-residue chain is UPF0509 protein YciZ (57 aa).

The protein belongs to the UPF0509 family.

The polypeptide is UPF0509 protein YciZ (yciZ) (Shigella flexneri).